A 423-amino-acid chain; its full sequence is tRNA(Ile2) 2-agmatinylcytidine synthetase TiaS (423 aa).

Positions 273 to 347 (VIVYGRVVEE…GINIEKIKIL (75 aa)) form a DNA-binding region, OB.

It belongs to the TiaS family.

It localises to the cytoplasm. The catalysed reaction is cytidine(34) in tRNA(Ile2) + agmatine + ATP + H2O = 2-agmatinylcytidine(34) in tRNA(Ile2) + AMP + 2 phosphate + 2 H(+). Functionally, ATP-dependent agmatine transferase that catalyzes the formation of 2-agmatinylcytidine (agm2C) at the wobble position (C34) of tRNA(Ile2), converting the codon specificity from AUG to AUA. This is tRNA(Ile2) 2-agmatinylcytidine synthetase TiaS from Methanocaldococcus jannaschii (strain ATCC 43067 / DSM 2661 / JAL-1 / JCM 10045 / NBRC 100440) (Methanococcus jannaschii).